Consider the following 256-residue polypeptide: Sorbitol dehydrogenase (256 aa).

Residues 15 to 17 (RGI), Asp-36, 59 to 60 (DV), Asn-86, Tyr-152, Lys-156, and 182 to 187 (PGVVDG) contribute to the NAD(+) site. The Proton acceptor role is filled by Tyr-152.

Belongs to the short-chain dehydrogenases/reductases (SDR) family. As to quaternary structure, homodimer. May function as a tetramer in vivo.

The enzyme catalyses keto-D-fructose + NADH + H(+) = D-sorbitol + NAD(+). It catalyses the reaction galactitol + NAD(+) = keto-D-tagatose + NADH + H(+). The catalysed reaction is L-iditol + NAD(+) = keto-L-sorbose + NADH + H(+). Inhibited by DTT, N-bromosuccinimide and iodoacetic acid. Its function is as follows. Catalyzes the oxidation of D-sorbitol (D-glucitol) to D-fructose. Can also catalyze the oxidation of galactitol to D-tagatose and the oxidation of L-iditol, with lower efficiency. This Cereibacter sphaeroides (Rhodobacter sphaeroides) protein is Sorbitol dehydrogenase (polS).